The primary structure comprises 178 residues: 6,7-dimethyl-8-ribityllumazine synthase (178 aa).

Residues F23, 61–63, and 85–87 contribute to the 5-amino-6-(D-ribitylamino)uracil site; these read SFE and AVI. 90-91 contacts (2S)-2-hydroxy-3-oxobutyl phosphate; sequence QT. H93 functions as the Proton donor in the catalytic mechanism. Y118 serves as a coordination point for 5-amino-6-(D-ribitylamino)uracil. A (2S)-2-hydroxy-3-oxobutyl phosphate-binding site is contributed by R132.

This sequence belongs to the DMRL synthase family.

It catalyses the reaction (2S)-2-hydroxy-3-oxobutyl phosphate + 5-amino-6-(D-ribitylamino)uracil = 6,7-dimethyl-8-(1-D-ribityl)lumazine + phosphate + 2 H2O + H(+). It functions in the pathway cofactor biosynthesis; riboflavin biosynthesis; riboflavin from 2-hydroxy-3-oxobutyl phosphate and 5-amino-6-(D-ribitylamino)uracil: step 1/2. Its function is as follows. Catalyzes the formation of 6,7-dimethyl-8-ribityllumazine by condensation of 5-amino-6-(D-ribitylamino)uracil with 3,4-dihydroxy-2-butanone 4-phosphate. This is the penultimate step in the biosynthesis of riboflavin. The polypeptide is 6,7-dimethyl-8-ribityllumazine synthase (Thermosynechococcus vestitus (strain NIES-2133 / IAM M-273 / BP-1)).